A 327-amino-acid chain; its full sequence is Phenylalanine--tRNA ligase alpha subunit (327 aa).

Position 252 (glutamate 252) interacts with Mg(2+).

The protein belongs to the class-II aminoacyl-tRNA synthetase family. Phe-tRNA synthetase alpha subunit type 1 subfamily. As to quaternary structure, tetramer of two alpha and two beta subunits. Mg(2+) serves as cofactor.

It is found in the cytoplasm. It carries out the reaction tRNA(Phe) + L-phenylalanine + ATP = L-phenylalanyl-tRNA(Phe) + AMP + diphosphate + H(+). This Shewanella sediminis (strain HAW-EB3) protein is Phenylalanine--tRNA ligase alpha subunit.